The sequence spans 210 residues: RNA chaperone ProQ (210 aa).

The interval 118-146 is disordered; it reads KAAKPEKKRPARRVAAKGQHAKETTTNKA. Residues 123–132 are compositionally biased toward basic residues; that stretch reads EKKRPARRVA.

This sequence belongs to the ProQ family.

The protein resides in the cytoplasm. RNA chaperone with significant RNA binding, RNA strand exchange and RNA duplexing activities. This chain is RNA chaperone ProQ, found in Pasteurella multocida (strain Pm70).